The sequence spans 406 residues: Proteasome-activating nucleotidase 1 (406 aa).

Over residues 1–12 (MTDTVEDVELPY) the composition is skewed to acidic residues. The tract at residues 1 to 20 (MTDTVEDVELPYDDSASQQD) is disordered. Positions 12–70 (YDDSASQQDKLEALEEQLSTLEEENEEMRDRLLDANAENNKYQQKLERLSHENKKLKQS) form a coiled coil. ATP-binding positions include 192–197 (GTGKTL) and H331. A disordered region spans residues 385–406 (AREKLDQDSEPAAATDVSRTFA). Positions 404–406 (TFA) are docks into pockets in the proteasome alpha-ring to cause gate opening.

It belongs to the AAA ATPase family. As to quaternary structure, homohexamer. The hexameric complex has a two-ring architecture resembling a top hat that caps the 20S proteasome core at one or both ends. Upon ATP-binding, the C-terminus of PAN interacts with the alpha-rings of the proteasome core by binding to the intersubunit pockets.

The protein localises to the cytoplasm. Functionally, ATPase which is responsible for recognizing, binding, unfolding and translocation of substrate proteins into the archaeal 20S proteasome core particle. Is essential for opening the gate of the 20S proteasome via an interaction with its C-terminus, thereby allowing substrate entry and access to the site of proteolysis. Thus, the C-termini of the proteasomal ATPase function like a 'key in a lock' to induce gate opening and therefore regulate proteolysis. Unfolding activity requires energy from ATP hydrolysis, whereas ATP binding alone promotes ATPase-20S proteasome association which triggers gate opening, and supports translocation of unfolded substrates. The chain is Proteasome-activating nucleotidase 1 from Halobacterium salinarum (strain ATCC 700922 / JCM 11081 / NRC-1) (Halobacterium halobium).